We begin with the raw amino-acid sequence, 161 residues long: Periplasmic chaperone Spy (161 aa).

Positions 1-23 (MRKLTALFVASTLALGAANLAHA) are cleaved as a signal peptide. The disordered stretch occupies residues 140–161 (ANFEKRLTERPAAKGKMPATAE). Residues 142–151 (FEKRLTERPA) show a composition bias toward basic and acidic residues.

This sequence belongs to the CpxP/Spy family. Homodimer.

The protein resides in the periplasm. Its function is as follows. An ATP-independent periplasmic chaperone, decreases protein aggregation and helps protein refolding. Binds substrate over a large region of its convex inner surface. Substrate protein folds while it is bound to chaperone. Increasing Spy flexibility increases its substrate affinity and overall chaperone activity (shown for 3 different substrates). Protects proteins in vitro against tannin inactivation; tannins have antimicrobial activity. Overexpression enhances the stability of otherwise unstable periplasmic proteins. This chain is Periplasmic chaperone Spy, found in Escherichia coli (strain K12).